We begin with the raw amino-acid sequence, 821 residues long: MSPSPAERAEDLRRQIAQANRAYHELDAPEIPDVDYDRMVRELEALEREHPELARADSPTQQVGARPSGRFPEVRHAVPMLSLSNAFSDEEVADFVRRIDERLGRRSLRFSAEPKMDGLAISLRYEDGHFVLGATRGDGSTGEDVTANLREIGDIPKRLHGKDWPDVLEVRGEVYMARADFEAYNERARLQGGKVLANPRNAAAGSLRQLDPKISAQRRLSFFAYGTGEVQGGELPDTHSGTLAQLGAWGFPVSELCKVVEGTDGLLGYYRTIGERRDGLPFDIDGVVYKLDDRAGQQAMGFVSRAPRWAIAHKFPAQEQSTTVEAIEIQIGRTGAATPVARLAPVAVAGVIVSNATLHNADQIARLDVRVGDSVIVRRAGDVIPEVVSVILDRRPQGTTPWQMPTRCPVCGSEIVREEGAAAWRCSGELSCPAQRKEAIAHFASRRAMDIDGLGDKYIETLVDAGIVKSVADLYRLSRDTLLHLKLVLDAEEPSALAAALKLHLPAEGSGAVLNAVLKLDGNDPGWRAQALAQPASFEWNTKKIATKWADNLIAAIDASRAATLERVLFALGIEHVGESTAKALAQWFGDLELIRHLPWPLFKRVPDIGGEVARSLGHFFEQQGNQQAIDDLLQVGQVRIADVHAPSAKLREGLDLAQLLVESEIPGITRLRAEKLVAALPGAQAVLDAEHGQFVNAGLPDDTARGLAEWLDADGHGAMLLAAENAMREILAKAPALAEIVAGPLDGQTVVLTGTLAQLTRDAAKERLEALGAKVSGSVSKKTSFVVAGTEAGSKLDKAQSLGVSVWDEDRLLAYLAEHE.

Residues 33–37 (DVDYD), 82–83 (SL), and Glu-113 each bind NAD(+). The N6-AMP-lysine intermediate role is filled by Lys-115. NAD(+)-binding residues include Arg-136, Glu-173, Lys-290, and Lys-314. 4 residues coordinate Zn(2+): Cys-408, Cys-411, Cys-426, and Cys-432. The BRCT domain occupies 741–821 (IVAGPLDGQT…RLLAYLAEHE (81 aa)).

It belongs to the NAD-dependent DNA ligase family. LigA subfamily. It depends on Mg(2+) as a cofactor. Mn(2+) serves as cofactor.

The enzyme catalyses NAD(+) + (deoxyribonucleotide)n-3'-hydroxyl + 5'-phospho-(deoxyribonucleotide)m = (deoxyribonucleotide)n+m + AMP + beta-nicotinamide D-nucleotide.. DNA ligase that catalyzes the formation of phosphodiester linkages between 5'-phosphoryl and 3'-hydroxyl groups in double-stranded DNA using NAD as a coenzyme and as the energy source for the reaction. It is essential for DNA replication and repair of damaged DNA. In Stenotrophomonas maltophilia (strain K279a), this protein is DNA ligase.